The primary structure comprises 123 residues: Small ribosomal subunit protein bS6 (123 aa).

The disordered stretch occupies residues 102–123 (MLKQKEERAPRREAEAKEFAAE). A compositionally biased stretch (basic and acidic residues) spans 104–123 (KQKEERAPRREAEAKEFAAE).

It belongs to the bacterial ribosomal protein bS6 family.

In terms of biological role, binds together with bS18 to 16S ribosomal RNA. This chain is Small ribosomal subunit protein bS6, found in Vibrio vulnificus (strain CMCP6).